The sequence spans 412 residues: MVVRALVRAHPLSRISCRYSSLAASSFNPKPYIPSVSGVQKSLPFDNLLEQYSRVHWDDTVTYDDPTVQRLFKNLMSGSRAALASAITLVESRHPTKRAQGNMLLKMVLDEEREKYKKYGRDSMIFRVGISGSPGVGKSSFIEALGAELTENRGKKVAVLTIDPTSAMTGGSVLGDLTRMQELSRNPRAYIRQSPTSGSLGGVTRGIHEAVILCEGAGYDIVIIETVGVGQSETSVSDMCDMMCLLLSPAHGDELQGVKRGIMEMSDLLVVTKDDGDLQAKAKMTQAEYISALKFMRPRLDVWSPKVMRSSIMNKESVSAVCTSLYEFWDTIGESGDLERRRQDQMKKWMWNHVKDEIMAVFQKHPKIIHLKNHKIFINLLLQAPKLEKDISSGKITPGLAAETMIRTFFGV.

Residues 1–15 constitute a mitochondrion transit peptide; sequence MVVRALVRAHPLSRI. GTP contacts are provided by residues 132–140, D275, and 311–313; these read GSPGVGKSS and SIM.

It belongs to the SIMIBI class G3E GTPase family. ArgK/MeaB subfamily.

The protein resides in the mitochondrion. In terms of biological role, may have GTPase activity. May also bind and hydrolyze ATP. May function as chaperone. Likely to have a role in propionyl-CoA metabolism and adenosylcobalamin synthesis. The protein is Methylmalonic aciduria type A homolog, mitochondrial of Caenorhabditis briggsae.